Here is a 481-residue protein sequence, read N- to C-terminus: Serralysin B (481 aa).

The propeptide occupies 1–15 (MQQNEKASLNTSAAA). H189 serves as a coordination point for Zn(2+). Residue E190 is part of the active site. 2 residues coordinate Zn(2+): H193 and Y230. Ca(2+)-binding residues include R267, G269, T271, D299, G301, G302, D304, T341, E343, G348, G350, D352, N357, A359, N361, G365, G366, A367, G368, D370, G374, G377, D379, G383, G384, A385, G386, D388, D397, D404, and D414. Hemolysin-type calcium-binding repeat units follow at residues 346-363 (IGGS…DNIL), 364-381 (QGGA…ADTL), and 382-399 (TGGA…QDST).

The protein belongs to the peptidase M10B family. Requires Ca(2+) as cofactor. Zn(2+) is required as a cofactor.

It localises to the secreted. It catalyses the reaction Preferential cleavage of bonds with hydrophobic residues in P1'.. This chain is Serralysin B (prtB), found in Dickeya chrysanthemi (Pectobacterium chrysanthemi).